The sequence spans 273 residues: Probable ribosomal RNA small subunit methyltransferase A (273 aa).

Positions 23, 25, 50, 71, 95, and 110 each coordinate S-adenosyl-L-methionine.

This sequence belongs to the class I-like SAM-binding methyltransferase superfamily. rRNA adenine N(6)-methyltransferase family. RsmA subfamily.

The protein resides in the cytoplasm. Specifically dimethylates two adjacent adenosines in the loop of a conserved hairpin near the 3'-end of 16S rRNA in the 30S particle. May play a critical role in biogenesis of 30S subunits. In Pyrococcus furiosus (strain ATCC 43587 / DSM 3638 / JCM 8422 / Vc1), this protein is Probable ribosomal RNA small subunit methyltransferase A.